Consider the following 320-residue polypeptide: tRNA dimethylallyltransferase (320 aa).

16–23 serves as a coordination point for ATP; it reads GPTASGKT. Substrate is bound at residue 18–23; sequence TASGKT. Interaction with substrate tRNA stretches follow at residues 41–44, 165–169, and 247–252; these read DSAL, QRIQR, and RCVGYR.

It belongs to the IPP transferase family. As to quaternary structure, monomer. Mg(2+) is required as a cofactor.

It carries out the reaction adenosine(37) in tRNA + dimethylallyl diphosphate = N(6)-dimethylallyladenosine(37) in tRNA + diphosphate. Catalyzes the transfer of a dimethylallyl group onto the adenine at position 37 in tRNAs that read codons beginning with uridine, leading to the formation of N6-(dimethylallyl)adenosine (i(6)A). The polypeptide is tRNA dimethylallyltransferase (Azoarcus sp. (strain BH72)).